Reading from the N-terminus, the 532-residue chain is Pentatricopeptide repeat-containing protein At5g66500, mitochondrial (532 aa).

The transit peptide at Met-1–Phe-33 directs the protein to the mitochondrion. 12 PPR repeats span residues Asp-48–Leu-82, Ser-83–Thr-117, Gly-118–Lys-148, Asp-149–Ile-183, Ser-184–Leu-218, Thr-223–His-248, Asp-250–Asn-280, Val-281–Ser-314, Asp-315–Lys-345, Ser-346–Val-380, Asn-383–Lys-413, and Gly-419–Ser-453. Residues Ile-458–Ile-532 form a type E motif; degenerate region.

This sequence belongs to the PPR family. PCMP-E subfamily.

It is found in the mitochondrion. The protein is Pentatricopeptide repeat-containing protein At5g66500, mitochondrial (PCMP-E38) of Arabidopsis thaliana (Mouse-ear cress).